Here is a 581-residue protein sequence, read N- to C-terminus: Urease subunit alpha (581 aa).

The region spanning 134-581 is the Urease domain; sequence GGFDSHIHFI…LPMTQRYFLF (448 aa). Residues His139, His141, and Lys222 each contribute to the Ni(2+) site. Lys222 is subject to N6-carboxylysine. His224 lines the substrate pocket. Ni(2+) is bound by residues His251 and His277. The active-site Proton donor is His325. Asp365 contacts Ni(2+).

This sequence belongs to the metallo-dependent hydrolases superfamily. Urease alpha subunit family. As to quaternary structure, heterotrimer of UreA (gamma), UreB (beta) and UreC (alpha) subunits. Three heterotrimers associate to form the active enzyme. Ni cation is required as a cofactor. Carboxylation allows a single lysine to coordinate two nickel ions.

The protein localises to the cytoplasm. It catalyses the reaction urea + 2 H2O + H(+) = hydrogencarbonate + 2 NH4(+). It participates in nitrogen metabolism; urea degradation; CO(2) and NH(3) from urea (urease route): step 1/1. This Albidiferax ferrireducens (strain ATCC BAA-621 / DSM 15236 / T118) (Rhodoferax ferrireducens) protein is Urease subunit alpha.